A 253-amino-acid chain; its full sequence is Imidazole glycerol phosphate synthase subunit HisF (253 aa).

Catalysis depends on residues D11 and D130.

It belongs to the HisA/HisF family. Heterodimer of HisH and HisF.

It localises to the cytoplasm. The enzyme catalyses 5-[(5-phospho-1-deoxy-D-ribulos-1-ylimino)methylamino]-1-(5-phospho-beta-D-ribosyl)imidazole-4-carboxamide + L-glutamine = D-erythro-1-(imidazol-4-yl)glycerol 3-phosphate + 5-amino-1-(5-phospho-beta-D-ribosyl)imidazole-4-carboxamide + L-glutamate + H(+). Its pathway is amino-acid biosynthesis; L-histidine biosynthesis; L-histidine from 5-phospho-alpha-D-ribose 1-diphosphate: step 5/9. In terms of biological role, IGPS catalyzes the conversion of PRFAR and glutamine to IGP, AICAR and glutamate. The HisF subunit catalyzes the cyclization activity that produces IGP and AICAR from PRFAR using the ammonia provided by the HisH subunit. This Myxococcus xanthus (strain DK1622) protein is Imidazole glycerol phosphate synthase subunit HisF.